A 391-amino-acid chain; its full sequence is 3-ketoacyl-CoA thiolase (391 aa).

Cys95 functions as the Acyl-thioester intermediate in the catalytic mechanism. Catalysis depends on proton acceptor residues His347 and Cys377.

The protein belongs to the thiolase-like superfamily. Thiolase family. As to quaternary structure, heterotetramer of two alpha chains (FadB) and two beta chains (FadA).

The protein resides in the cytoplasm. It carries out the reaction an acyl-CoA + acetyl-CoA = a 3-oxoacyl-CoA + CoA. It functions in the pathway lipid metabolism; fatty acid beta-oxidation. Catalyzes the final step of fatty acid oxidation in which acetyl-CoA is released and the CoA ester of a fatty acid two carbons shorter is formed. This Saccharophagus degradans (strain 2-40 / ATCC 43961 / DSM 17024) protein is 3-ketoacyl-CoA thiolase.